A 276-amino-acid chain; its full sequence is Large ribosomal subunit protein uL2 (276 aa).

Disordered stretches follow at residues 14–58 and 221–276; these read RNAS…GGGH and TRGE…KNRK. Polar residues predominate over residues 16–27; that stretch reads ASVSDFSELTRS. Basic residues predominate over residues 255-276; sequence RRPKKASNKMIVRRRPSGKNRK.

The protein belongs to the universal ribosomal protein uL2 family. In terms of assembly, part of the 50S ribosomal subunit. Forms a bridge to the 30S subunit in the 70S ribosome.

Functionally, one of the primary rRNA binding proteins. Required for association of the 30S and 50S subunits to form the 70S ribosome, for tRNA binding and peptide bond formation. It has been suggested to have peptidyltransferase activity; this is somewhat controversial. Makes several contacts with the 16S rRNA in the 70S ribosome. The sequence is that of Large ribosomal subunit protein uL2 from Bifidobacterium longum subsp. infantis (strain ATCC 15697 / DSM 20088 / JCM 1222 / NCTC 11817 / S12).